A 700-amino-acid polypeptide reads, in one-letter code: Dymeclin (700 aa).

A lipid anchor (N-myristoyl glycine) is attached at glycine 2. Serine 347 is subject to Phosphoserine.

The protein belongs to the dymeclin family.

The protein is Dymeclin of Drosophila pseudoobscura pseudoobscura (Fruit fly).